Consider the following 259-residue polypeptide: Apolipoprotein A-I (259 aa).

The first 18 residues, 1–18, serve as a signal peptide directing secretion; sequence MKAAVLAVALVFLTGCQA. Repeat copies occupy residues 67-88 and 89-110. Residues 67–259 are 10 X approximate tandem repeats; that stretch reads LNLLDNWDTL…IDEAKKKLNA (193 aa). Methionine 109 bears the Methionine sulfoxide mark. One copy of the 3; half-length repeat lies at 111-121; the sequence is KDLENVKQKMQ. The stretch at 122–143 is repeat 4; sequence PHLDEFQEKWNEEVEAYRQKLE. The stretch at 144-161 is one 5; truncated repeat; it reads PLGTELHKNAKEMQRHLK. Residues 162 to 183 form repeat 6; it reads VVAEEFRDRMRVNADALRAKFG. Residues 184 to 203 form a 7; truncated repeat; sequence LYSDQMRENLAQRLTEIKNH. Residue methionine 189 is modified to Methionine sulfoxide. The stretch at 204 to 225 is repeat 8; the sequence is PTLIEYHTKASDHLKTLGEKAK. The 9; half-length repeat unit spans residues 226-236; the sequence is PALDDLGQGLM. Position 236 is a methionine sulfoxide (methionine 236). Repeat 10 spans residues 237–259; the sequence is PVLEAWKAKIMSMIDEAKKKLNA.

This sequence belongs to the apolipoprotein A1/A4/E family. In terms of assembly, homodimer. Interacts with APOA1BP and CLU. Component of a sperm activating protein complex (SPAP), consisting of APOA1, an immunoglobulin heavy chain, an immunoglobulin light chain and albumin. Interacts with NDRG1. Interacts with SCGB3A2. Interacts with NAXE and YJEFN3. Post-translationally, glycosylated. Palmitoylated. In terms of processing, phosphorylation sites are present in the extracellular medium. Major protein of plasma HDL, also found in chylomicrons.

The protein resides in the secreted. Functionally, participates in the reverse transport of cholesterol from tissues to the liver for excretion by promoting cholesterol efflux from tissues and by acting as a cofactor for the lecithin cholesterol acyltransferase (LCAT). As part of the SPAP complex, activates spermatozoa motility. In Rattus norvegicus (Rat), this protein is Apolipoprotein A-I (Apoa1).